The chain runs to 434 residues: Protein POLLENLESS 3 (434 aa).

A disordered region spans residues 13–47 (VYYTPPPARTSDHVAAMPMTERRRPPYSCSSSSER). The Nuclear localization signal 1 motif lies at 34-37 (RRRP). TPR repeat units lie at residues 95–131 (DSAL…ESQD), 133–164 (IDNL…LEQG), 191–224 (ARIL…ERDK), and 241–274 (PEAK…AVEM). Residues 142-166 (KKSGRIEEEAVLLEHKLQTLEQGMG) adopt a coiled-coil conformation. Positions 309 to 329 (TANKNYSDVSSSPASVRPNSA) are disordered. Positions 310–326 (ANKNYSDVSSSPASVRP) are enriched in polar residues. A Nuclear localization signal 2 motif is present at residues 377-380 (KRKK). Residues 393-408 (VKDTADGPKSESKKSW) are compositionally biased toward basic and acidic residues. The tract at residues 393-434 (VKDTADGPKSESKKSWADIAEEEEAEEEEEERLQGELKTAEM) is disordered. Positions 408 to 434 (WADIAEEEEAEEEEEERLQGELKTAEM) form a coiled coil. Positions 411–423 (IAEEEEAEEEEEE) are enriched in acidic residues. Residues 424–434 (RLQGELKTAEM) are compositionally biased toward basic and acidic residues.

This sequence belongs to the MS5 protein family. As to expression, expressed at low levels mostly in floral organs during meiosis. Also barely detectable in leaves, stems and roots.

Its subcellular location is the nucleus. Functionally, essential for male fertility, especially for microspore and pollen grain production. Involved in the regulation of cell division after male meiosis I and II to facilitate exit from meiosis and transition to G1. The protein is Protein POLLENLESS 3 of Arabidopsis thaliana (Mouse-ear cress).